Here is a 179-residue protein sequence, read N- to C-terminus: Large ribosomal subunit protein bL25 (179 aa).

The protein belongs to the bacterial ribosomal protein bL25 family. CTC subfamily. Part of the 50S ribosomal subunit; part of the 5S rRNA/L5/L18/L25 subcomplex. Contacts the 5S rRNA. Binds to the 5S rRNA independently of L5 and L18.

Its function is as follows. This is one of the proteins that binds to the 5S RNA in the ribosome where it forms part of the central protuberance. The sequence is that of Large ribosomal subunit protein bL25 from Desulfitobacterium hafniense (strain DSM 10664 / DCB-2).